The following is a 724-amino-acid chain: RINT1-like protein (724 aa).

Positions 163–724 constitute an RINT1/TIP20 domain; the sequence is RLHAVQAQSL…LERRMDIKMF (562 aa).

The protein belongs to the RINT1 family.

During cytokinesis in male meiotic cells, required for completion of cleavage furrow ingression possibly in conjunction with Zw10. Required for maintenance of Golgi stack number and morphology. Essential for acroblast assembly. In Drosophila melanogaster (Fruit fly), this protein is RINT1-like protein.